We begin with the raw amino-acid sequence, 209 residues long: Glutathione S-transferase 1-1 (209 aa).

The region spanning 1 to 81 (MADFYYLPGS…YLVEKYGKTD (81 aa)) is the GST N-terminal domain. Residues Ser10, 51 to 53 (HTI), and 65 to 67 (ESR) each bind glutathione. Positions 87–209 (CPKKRAVINQ…GCLEFKKYFE (123 aa)) constitute a GST C-terminal domain.

The protein belongs to the GST superfamily. Theta family. Homodimer.

The catalysed reaction is RX + glutathione = an S-substituted glutathione + a halide anion + H(+). The enzyme catalyses 1,1,1-trichloro-2,2-bis(4-chlorophenyl)ethane = 1,1-dichloro-2,2-bis(4-chlorophenyl)ethylene + chloride + H(+). Its function is as follows. Conjugation of reduced glutathione to a wide number of exogenous and endogenous hydrophobic electrophiles. Has DDT dehydrochlorinase activity. This chain is Glutathione S-transferase 1-1 (GstD1), found in Drosophila simulans (Fruit fly).